The following is a 314-amino-acid chain: Polyadenylate-binding protein-interacting protein 8 (314 aa).

The segment at 1–47 (MAAITEMATDSNDVINDGGTGDGIEKSTDSKPEIESDDLKPKSKPEY) is disordered. A compositionally biased stretch (basic and acidic residues) spans 23-47 (GIEKSTDSKPEIESDDLKPKSKPEY). Residues 59–69 (KLNPEAKEFFP) carry the PAM2-like motif. The short motif at 99-112 (RRRRNNYNQGRRVR) is the Bipartite nuclear localization signal element. 2 consecutive RRM domains span residues 128-203 (RTVY…PSKT) and 225-301 (RTIY…PSKT).

In terms of assembly, interacts with MPC. As to expression, expressed in cauline leaves, stems, rosette leaves, immature siliques and primary inflorescences but at a low level.

Its subcellular location is the nucleus. This Arabidopsis thaliana (Mouse-ear cress) protein is Polyadenylate-binding protein-interacting protein 8 (CID8).